We begin with the raw amino-acid sequence, 419 residues long: Histidine--tRNA ligase (419 aa).

The protein belongs to the class-II aminoacyl-tRNA synthetase family. Homodimer.

It is found in the cytoplasm. It catalyses the reaction tRNA(His) + L-histidine + ATP = L-histidyl-tRNA(His) + AMP + diphosphate + H(+). The protein is Histidine--tRNA ligase of Halothermothrix orenii (strain H 168 / OCM 544 / DSM 9562).